The chain runs to 456 residues: Glycerol-3-phosphate acyltransferase 4 (456 aa).

An N-terminal signal peptide occupies residues 1-37; sequence MFLLLPFDSLIVNLLGISLTVLFTLLLVFIIVPAIFG. A run of 2 helical transmembrane segments spans residues 156–176 and 180–200; these read ISLR…CFLL and IALA…VGYL. N-linked (GlcNAc...) asparagine glycosylation is present at asparagine 247. The HXXXXD motif signature appears at 248-253; the sequence is HTSPID. Asparagine 327, asparagine 328, and asparagine 362 each carry an N-linked (GlcNAc...) asparagine glycan.

It belongs to the 1-acyl-sn-glycerol-3-phosphate acyltransferase family. As to expression, ubiquitous. High levels in testis. Relatively high level of expression in skeletal muscle and heart. Relatively low level of expression in lung.

It localises to the endoplasmic reticulum membrane. It catalyses the reaction sn-glycerol 3-phosphate + an acyl-CoA = a 1-acyl-sn-glycero-3-phosphate + CoA. The enzyme catalyses dodecanoyl-CoA + sn-glycerol 3-phosphate = 1-dodecanoyl-sn-glycerol 3-phosphate + CoA. The catalysed reaction is sn-glycerol 3-phosphate + hexadecanoyl-CoA = 1-hexadecanoyl-sn-glycero-3-phosphate + CoA. It carries out the reaction sn-glycerol 3-phosphate + octadecanoyl-CoA = 1-octadecanoyl-sn-glycero-3-phosphate + CoA. It catalyses the reaction sn-glycerol 3-phosphate + (9Z)-octadecenoyl-CoA = 1-(9Z-octadecenoyl)-sn-glycero-3-phosphate + CoA. The enzyme catalyses (9Z,12Z)-octadecadienoyl-CoA + sn-glycerol 3-phosphate = 1-(9Z,12Z)-octadecadienoyl-sn-glycero-3-phosphate + CoA. It functions in the pathway phospholipid metabolism; CDP-diacylglycerol biosynthesis; CDP-diacylglycerol from sn-glycerol 3-phosphate: step 1/3. With respect to regulation, inhibited by N-ethylmaleimide (NEM). Its function is as follows. Converts glycerol-3-phosphate to 1-acyl-sn-glycerol-3-phosphate (lysophosphatidic acid or LPA) by incorporating an acyl moiety at the sn-1 position of the glycerol backbone. Active against both saturated and unsaturated long-chain fatty acyl-CoAs. Protects cells against lipotoxicity. The protein is Glycerol-3-phosphate acyltransferase 4 of Homo sapiens (Human).